The primary structure comprises 358 residues: Alanine racemase (358 aa).

The Proton acceptor; specific for D-alanine role is filled by K35. N6-(pyridoxal phosphate)lysine is present on K35. Residue R130 coordinates substrate. The active-site Proton acceptor; specific for L-alanine is Y255. M303 provides a ligand contact to substrate.

It belongs to the alanine racemase family. Requires pyridoxal 5'-phosphate as cofactor.

It carries out the reaction L-alanine = D-alanine. The protein operates within amino-acid biosynthesis; D-alanine biosynthesis; D-alanine from L-alanine: step 1/1. Catalyzes the interconversion of L-alanine and D-alanine. May also act on other amino acids. The chain is Alanine racemase (alr) from Shewanella baltica (strain OS195).